The chain runs to 405 residues: GTPase Obg (405 aa).

The 159-residue stretch at 1 to 159 folds into the Obg domain; that stretch reads MRFIDEAVVT…KVLKFELKVV (159 aa). Residues 160-333 form the OBG-type G domain; it reads ADVGLIGLPN…IKYHLMNEIE (174 aa). Residues 166–173, 191–195, 213–216, 283–286, and 314–316 each bind GTP; these read GLPNAGKS, FTTLV, DIPG, NKID, and ATL. Mg(2+) contacts are provided by Ser-173 and Thr-193. The span at 371–382 shows a compositional bias: basic and acidic residues; that stretch reads YRAARKAAREGT. The disordered stretch occupies residues 371–405; it reads YRAARKAAREGTDLSDDDFDDSDDDDDGVEVVYAP. Positions 383-399 are enriched in acidic residues; sequence DLSDDDFDDSDDDDDGV.

It belongs to the TRAFAC class OBG-HflX-like GTPase superfamily. OBG GTPase family. In terms of assembly, monomer. Requires Mg(2+) as cofactor.

It is found in the cytoplasm. Functionally, an essential GTPase which binds GTP, GDP and possibly (p)ppGpp with moderate affinity, with high nucleotide exchange rates and a fairly low GTP hydrolysis rate. Plays a role in control of the cell cycle, stress response, ribosome biogenesis and in those bacteria that undergo differentiation, in morphogenesis control. The protein is GTPase Obg of Psychrobacter cryohalolentis (strain ATCC BAA-1226 / DSM 17306 / VKM B-2378 / K5).